Here is a 256-residue protein sequence, read N- to C-terminus: Small ribosomal subunit protein eS1B (256 aa).

A2 carries the N-acetylalanine; partial modification.

Belongs to the eukaryotic ribosomal protein eS1 family. Component of the small ribosomal subunit. Mature ribosomes consist of a small (40S) and a large (60S) subunit. The 40S subunit contains about 33 different proteins and 1 molecule of RNA (18S). The 60S subunit contains about 49 different proteins and 3 molecules of RNA (25S, 5.8S and 5S).

The protein localises to the cytoplasm. In Scheffersomyces stipitis (strain ATCC 58785 / CBS 6054 / NBRC 10063 / NRRL Y-11545) (Yeast), this protein is Small ribosomal subunit protein eS1B.